Reading from the N-terminus, the 717-residue chain is Coupling protein TraD (717 aa).

The Cytoplasmic portion of the chain corresponds to Met-1–Asn-27. The chain crosses the membrane as a helical span at residues Ile-28–Ile-47. Residues Lys-48–Cys-104 lie on the Periplasmic side of the membrane. A helical transmembrane segment spans residues Ser-105 to Val-130. Over Ser-131–Phe-717 the chain is Cytoplasmic. ATP is bound at residue Gly-192–Ser-199. Disordered regions lie at residues Glu-614–Val-639 and Leu-650–Ser-669.

Belongs to the TrwB coupling protein family. As to quaternary structure, interacts with relaxosome component TraM. May form a hexamer in the membrane.

The protein localises to the cell inner membrane. Conjugative DNA transfer (CDT) is the unidirectional transfer of ssDNA plasmid from a donor to a recipient cell. It is the central mechanism by which antibiotic resistance and virulence factors are propagated in bacterial populations. Couples the transferosome to a type IV secretion system. Probably forms a pore through which single-stranded plasmid DNA is transferred to the secretion system. The last 37 residues are important for determining plasmid specificity and transfer efficiency, with additional specificity conferred by the TraD-TraM pair. This Escherichia coli (strain K12) protein is Coupling protein TraD (traD).